The sequence spans 131 residues: Profilin-3 (131 aa).

Belongs to the profilin family. In terms of assembly, occurs in many kinds of cells as a complex with monomeric actin in a 1:1 ratio.

It is found in the cytoplasm. The protein localises to the cytoskeleton. Functionally, binds to actin and affects the structure of the cytoskeleton. At high concentrations, profilin prevents the polymerization of actin, whereas it enhances it at low concentrations. By binding to PIP2, it inhibits the formation of IP3 and DG. This chain is Profilin-3, found in Malus domestica (Apple).